Here is a 197-residue protein sequence, read N- to C-terminus: Probable chorismate pyruvate-lyase (197 aa).

Residues Arg-77, Leu-115, and Glu-176 each coordinate substrate.

Belongs to the UbiC family.

Its subcellular location is the cytoplasm. The catalysed reaction is chorismate = 4-hydroxybenzoate + pyruvate. It participates in cofactor biosynthesis; ubiquinone biosynthesis. In terms of biological role, removes the pyruvyl group from chorismate, with concomitant aromatization of the ring, to provide 4-hydroxybenzoate (4HB) for the ubiquinone pathway. In Burkholderia ambifaria (strain ATCC BAA-244 / DSM 16087 / CCUG 44356 / LMG 19182 / AMMD) (Burkholderia cepacia (strain AMMD)), this protein is Probable chorismate pyruvate-lyase.